The chain runs to 390 residues: Probable tRNA pseudouridine synthase D (390 aa).

Asp93 acts as the Nucleophile in catalysis. In terms of domain architecture, TRUD spans 166–353 (HVLNYFGIQR…YGTRRKLITP (188 aa)).

This sequence belongs to the pseudouridine synthase TruD family.

The catalysed reaction is uridine(13) in tRNA = pseudouridine(13) in tRNA. In terms of biological role, could be responsible for synthesis of pseudouridine from uracil-13 in transfer RNAs. The sequence is that of Probable tRNA pseudouridine synthase D from Methanococcus vannielii (strain ATCC 35089 / DSM 1224 / JCM 13029 / OCM 148 / SB).